A 93-amino-acid polypeptide reads, in one-letter code: uncharacterized protein (93 aa).

A run of 3 helical transmembrane segments spans residues 9–29 (ITVIGYIAGTLTTFASLPQLI), 40–60 (ISLAFVITFTTGLTLWLIYGI), and 66–86 (PIIVFNILSLMFWIPITYLKI).

It is found in the cell membrane. This is an uncharacterized protein from Methanocaldococcus jannaschii (strain ATCC 43067 / DSM 2661 / JAL-1 / JCM 10045 / NBRC 100440) (Methanococcus jannaschii).